A 170-amino-acid chain; its full sequence is MKVRVGTTNPVKVRATERAFLRTFPDREITVEAVSVDPGVPPQPVGMEEVHQGAKNRAREAWNRGSYSVGLEAGLIRVGDVYVDLHVAVVRDPKGRETVGTSPGFQLPPDVTEEALSGEEVGEVFSELVGVREIGKRSGAIGVLSNGKVLREDLCELAILMALIGLETSR.

7 to 12 contributes to the substrate binding site; the sequence is TTNPVK. Mg(2+) is bound at residue aspartate 37.

This sequence belongs to the YjjX NTPase family. As to quaternary structure, homodimer. The cofactor is Mg(2+). It depends on Mn(2+) as a cofactor.

It catalyses the reaction XTP + H2O = XDP + phosphate + H(+). The catalysed reaction is ITP + H2O = IDP + phosphate + H(+). Phosphatase that hydrolyzes non-canonical purine nucleotides such as XTP and ITP to their respective diphosphate derivatives. Probably excludes non-canonical purines from DNA/RNA precursor pool, thus preventing their incorporation into DNA/RNA and avoiding chromosomal lesions. In Methanopyrus kandleri (strain AV19 / DSM 6324 / JCM 9639 / NBRC 100938), this protein is Probable inosine/xanthosine triphosphatase.